A 577-amino-acid polypeptide reads, in one-letter code: Arginine--tRNA ligase (577 aa).

Residues 122 to 132 (PNVAKEMHVGH) carry the 'HIGH' region motif.

It belongs to the class-I aminoacyl-tRNA synthetase family. As to quaternary structure, monomer.

It localises to the cytoplasm. It carries out the reaction tRNA(Arg) + L-arginine + ATP = L-arginyl-tRNA(Arg) + AMP + diphosphate. In Escherichia coli O7:K1 (strain IAI39 / ExPEC), this protein is Arginine--tRNA ligase.